The following is a 29-amino-acid chain: Myosin heavy chain, muscle (29 aa).

Positions 1–16 (SKYESEGVARSEELQE) are enriched in basic and acidic residues. The interval 1 to 29 (SKYESEGVARSEELQEVHQAFADAGRKPI) is disordered.

As to quaternary structure, muscle myosin is a hexameric protein that consists of 2 heavy chain subunits (MHC), 2 alkali light chain subunits (MLC) and 2 regulatory light chain subunits (MLC-2).

The protein localises to the cytoplasm. The protein resides in the myofibril. Functionally, muscle contraction. The chain is Myosin heavy chain, muscle from Bombyx mori (Silk moth).